Reading from the N-terminus, the 362-residue chain is Probable endopolygalacturonase B (362 aa).

Positions 1 to 20 (MHFLQNAVVAATMGAALAAA) are cleaved as a signal peptide. Positions 21-25 (APLEK) are excised as a propeptide. Cys28 and Cys43 form a disulfide bridge. PbH1 repeat units lie at residues 155 to 184 (ADHLTITDVTIDNSAGTSKGHNTDAFDIGQ), 185 to 206 (STYITIDGATVYNQDDCLAINS), 207 to 227 (GEHITFTNGYCDGGHGLSIGS), 236 to 257 (VNDVTISNSKVLNSQNGVRIKT), 265 to 287 (VENVKFEDITLSDISKYGIVVEQ), and 299 to 344 (TNGV…DVTG). Asp199 serves as the catalytic Proton donor. Cysteines 201 and 217 form a disulfide. The active site involves His221. A disulfide bond links Cys327 and Cys332. The N-linked (GlcNAc...) asparagine glycan is linked to Asn334. Residues Cys351 and Cys360 are joined by a disulfide bond.

The protein belongs to the glycosyl hydrolase 28 family.

It localises to the secreted. The enzyme catalyses (1,4-alpha-D-galacturonosyl)n+m + H2O = (1,4-alpha-D-galacturonosyl)n + (1,4-alpha-D-galacturonosyl)m.. Involved in maceration and soft-rotting of plant tissue. Hydrolyzes the 1,4-alpha glycosidic bonds of de-esterified pectate in the smooth region of the plant cell wall. This is Probable endopolygalacturonase B (pgaB) from Aspergillus niger (strain ATCC MYA-4892 / CBS 513.88 / FGSC A1513).